The following is a 151-amino-acid chain: Homeobox protein HD-1 (151 aa).

Positions 87–146 form a DNA-binding region, homeobox; the sequence is ESIKSRRFPKFITEALERSFEIDQYPSEAEKARLAKICKLSTKQINNWFTNKRNRTKGHE.

The protein localises to the nucleus. This Encephalitozoon cuniculi (strain GB-M1) (Microsporidian parasite) protein is Homeobox protein HD-1 (HD-1).